The sequence spans 221 residues: CASP-like protein 4C1 (221 aa).

The disordered stretch occupies residues 1–21 (MDSPESSDRGLNPMTPDHGGH). Residues 1 to 54 (MDSPESSDRGLNPMTPDHGGHNGKVVHYFGQGVEGGPASPRKLGHGHLHPKANT) lie on the Cytoplasmic side of the membrane. Residues 55-75 (ALLLLRLLTFAFSLASLVIMA) form a helical membrane-spanning segment. The Extracellular segment spans residues 76-101 (TNSATTTATAGRHRTVNWVDFDTYRY). Residues 102–122 (VLAACAIVCLYSFAEIGLGLW) traverse the membrane as a helical segment. Topologically, residues 123–144 (YLLKGRMVMPESMAHWFDFGHD) are cytoplasmic. Residues 145–165 (QGFAYLIFSACSGATAVAHNL) traverse the membrane as a helical segment. The Extracellular segment spans residues 166 to 189 (RERHILIHGMYGCDEANSFCMKAE). A helical transmembrane segment spans residues 190–210 (ISIGLAFGAFLFIALSSLLSG). The Cytoplasmic portion of the chain corresponds to 211–221 (YRLVKWLILGP).

The protein belongs to the Casparian strip membrane proteins (CASP) family. As to quaternary structure, homodimer and heterodimers.

It localises to the cell membrane. This chain is CASP-like protein 4C1, found in Pteridium aquilinum subsp. aquilinum (Bracken fern).